Reading from the N-terminus, the 502-residue chain is Na(+)/H(+) antiporter NhaB (502 aa).

11 helical membrane-spanning segments follow: residues 27–49 (AFLV…VLIL), 66–86 (PGGL…ESVF), 95–115 (VILL…LLLY), 128–148 (IVLS…LDAL), 149–169 (TVTA…HQFA), 241–261 (FFLQ…VTCI), 299–318 (IAAL…SLAL), 350–370 (FEEA…VAVI), 394–414 (MFFI…VATV), 450–470 (ATPN…APLI), and 477–497 (MVLM…IAVY).

The protein belongs to the NhaB Na(+)/H(+) (TC 2.A.34) antiporter family.

The protein resides in the cell inner membrane. The catalysed reaction is 2 Na(+)(in) + 3 H(+)(out) = 2 Na(+)(out) + 3 H(+)(in). Its function is as follows. Na(+)/H(+) antiporter that extrudes sodium in exchange for external protons. This is Na(+)/H(+) antiporter NhaB from Teredinibacter turnerae (strain ATCC 39867 / T7901).